We begin with the raw amino-acid sequence, 639 residues long: Sodium-dependent phosphate transport protein 2A (639 aa).

At 1 to 103 the chain is on the cytoplasmic side; that stretch reads MISYGENLGG…LRRAGVTLLK (103 aa). Phosphoserine occurs at positions 14 and 34. Residues 104 to 125 form a helical membrane-spanning segment; the sequence is VPLMLSFLYLFVCSLDVLSSAF. The Extracellular segment spans residues 126 to 145; the sequence is QLAGGKVAGDIFKDNAILSN. A helical membrane pass occupies residues 146–163; that stretch reads PVAGLVVGILVTVLVQSS. Residues 164–165 lie on the Cytoplasmic side of the membrane; it reads ST. Residues 166–185 traverse the membrane as a helical segment; the sequence is STSIVVSMVSSGLLEVSSAI. Topologically, residues 186-347 are extracellular; that stretch reads PIIMGSNIGT…HIFVDTGLPD (162 aa). Intrachain disulfides connect cysteine 225-cysteine 522 and cysteine 306-cysteine 336. N-linked (GlcNAc...) asparagine glycosylation is found at asparagine 298, asparagine 323, and asparagine 330. A helical membrane pass occupies residues 348 to 370; sequence LAVGLILLAGSLALLCTCLILLV. The Cytoplasmic segment spans residues 371–412; the sequence is KMLNSLLKGQVAKVIQKVINTDFPTPFTWATGYFAMVVGASM. The chain crosses the membrane as a helical span at residues 413-436; that stretch reads TFVVQSSSVFTSAITPLIGLGVIS. The Extracellular portion of the chain corresponds to 437–466; the sequence is IERAYPLTLGSNIGTTTTAILAALASPREK. Residues 467-487 form a helical membrane-spanning segment; it reads LSSAFQIALCHFFFNISGILL. The Cytoplasmic segment spans residues 488–513; it reads WYPVPCTRLPIRMAKALGKRTAKYRW. Threonine 508 is modified (phosphothreonine; by PKC). Residues 514–534 form a helical membrane-spanning segment; it reads FAVLYLLLCFLLLPSMVFGLS. Over 535 to 539 the chain is Extracellular; sequence MAGWR. Residues 540–561 traverse the membrane as a helical segment; that stretch reads AMVGVGAPFGALLAFVVLVSAL. At 562 to 639 the chain is on the cytoplasmic side; that stretch reads QHRSPGCLPK…MPHHHDATRL (78 aa). A Phosphoserine modification is found at serine 607. Threonine 623 bears the Phosphothreonine mark. A Phosphoserine modification is found at serine 625.

The protein belongs to the SLC34A transporter family. In terms of assembly, interacts via its C-terminal region with NHERF4. Interacts with NHERF1. Interacts with TMEM174; regulates SLC34A1 internalization by PTH and FGF23.

Its subcellular location is the apical cell membrane. The protein resides in the cell membrane. The enzyme catalyses 3 Na(+)(out) + phosphate(out) = 3 Na(+)(in) + phosphate(in). Its function is as follows. Involved in actively transporting phosphate into cells via Na(+) cotransport in the renal brush border membrane. The cotransport has a Na(+):Pi stoichiometry of 3:1 and is electrogenic. The sequence is that of Sodium-dependent phosphate transport protein 2A from Ovis aries (Sheep).